The primary structure comprises 498 residues: Glycerol kinase (498 aa).

Thr-12 is a binding site for ADP. ATP contacts are provided by Thr-12, Thr-13, and Ser-14. Thr-12 lines the sn-glycerol 3-phosphate pocket. Arg-16 lines the ADP pocket. Sn-glycerol 3-phosphate-binding residues include Arg-82, Glu-83, Tyr-135, and Asp-245. Glycerol contacts are provided by Arg-82, Glu-83, Tyr-135, Asp-245, and Gln-246. Residues Thr-267 and Gly-310 each coordinate ADP. ATP is bound by residues Thr-267, Gly-310, Gln-314, and Gly-411. ADP is bound by residues Gly-411 and Asn-415.

It belongs to the FGGY kinase family. In terms of assembly, homotetramer and homodimer (in equilibrium).

The catalysed reaction is glycerol + ATP = sn-glycerol 3-phosphate + ADP + H(+). It functions in the pathway polyol metabolism; glycerol degradation via glycerol kinase pathway; sn-glycerol 3-phosphate from glycerol: step 1/1. Its activity is regulated as follows. Activated by phosphorylation and inhibited by fructose 1,6-bisphosphate (FBP). Functionally, key enzyme in the regulation of glycerol uptake and metabolism. Catalyzes the phosphorylation of glycerol to yield sn-glycerol 3-phosphate. This Clostridium botulinum (strain Alaska E43 / Type E3) protein is Glycerol kinase.